The sequence spans 122 residues: MNAVAEAPATEDVPAPFVFTDSAADKVKQLIEEEGNAELKLRVFVQGGGCSGFQYGFTFDEDVNEDDTTMVKNGVTLLIDSMSYQYLVGAEIDYKEDINGAQFVIKNPNASTTCGCGSSFSV.

Positions 50, 114, and 116 each coordinate iron-sulfur cluster.

The protein belongs to the HesB/IscA family. Homodimer. The cofactor is iron-sulfur cluster.

Functionally, required for insertion of 4Fe-4S clusters. This is Putative iron-sulfur cluster insertion protein ErpA from Cupriavidus metallidurans (strain ATCC 43123 / DSM 2839 / NBRC 102507 / CH34) (Ralstonia metallidurans).